The primary structure comprises 130 residues: MSMQDPIADMLTRIRNGQAANKVAVTMPSSKLKVAIANVLKEEGYIEDFKIEGDTKPVLELELKYFQGKAVVESIQRVSRPGLRIYKRKDELPKVMAGLGIAVVSTSKGVMTDRAARQAGLGGEIICYVA.

This sequence belongs to the universal ribosomal protein uS8 family. As to quaternary structure, part of the 30S ribosomal subunit. Contacts proteins S5 and S12.

Functionally, one of the primary rRNA binding proteins, it binds directly to 16S rRNA central domain where it helps coordinate assembly of the platform of the 30S subunit. The chain is Small ribosomal subunit protein uS8 from Pectobacterium carotovorum subsp. carotovorum (strain PC1).